We begin with the raw amino-acid sequence, 262 residues long: MAIGKNKRISKGRKGGRKKVVDPLSRKEFYDLRAPSTFKVRNFGTTIASKNQGTKLAVDALRHRVYEVSLADLNNDEDQAFRKIKLQCEDIQGRTCLTEFHGMDMTRDKLCSLIRKYQTLIEAHCNVKTSDGYVLRLFCIAFTRRMADQVKSTCYAQTSQIRQIRKKMVEIITAEAEGTTLRDLVKKFIPESIGKEIEKACRHIFPLQHVFIRKVKVLSKPSFDVSRLMESHVGADGVEEKGTKVVSESNQATNLLTAEMKA.

This sequence belongs to the eukaryotic ribosomal protein eS1 family. In terms of assembly, component of the small ribosomal subunit. Mature ribosomes consist of a small (40S) and a large (60S) subunit. The 40S subunit contains about 33 different proteins and 1 molecule of RNA (18S). The 60S subunit contains about 49 different proteins and 3 molecules of RNA (25S, 5.8S and 5S).

It is found in the cytoplasm. This chain is Small ribosomal subunit protein eS1, found in Cryptosporidium hominis.